The primary structure comprises 276 residues: Large ribosomal subunit protein uL2 (276 aa).

A disordered region spans residues 224–276; sequence VMNPVDHPHGGGEGKAPIGRKSPMTPWGKPTLGYKTRKKKNKSDKFIIRRRKK. Residues 258–276 show a composition bias toward basic residues; the sequence is KTRKKKNKSDKFIIRRRKK.

This sequence belongs to the universal ribosomal protein uL2 family. As to quaternary structure, part of the 50S ribosomal subunit. Forms a bridge to the 30S subunit in the 70S ribosome.

In terms of biological role, one of the primary rRNA binding proteins. Required for association of the 30S and 50S subunits to form the 70S ribosome, for tRNA binding and peptide bond formation. It has been suggested to have peptidyltransferase activity; this is somewhat controversial. Makes several contacts with the 16S rRNA in the 70S ribosome. The polypeptide is Large ribosomal subunit protein uL2 (Geobacillus stearothermophilus (Bacillus stearothermophilus)).